Reading from the N-terminus, the 42-residue chain is Cytochrome b6-f complex subunit 7 (42 aa).

A helical transmembrane segment spans residues 15–35 (IVTAAVTCIFMVLFGLSLGFA).

It belongs to the PetM family. As to quaternary structure, the 4 large subunits of the cytochrome b6-f complex are cytochrome b6, subunit IV (17 kDa polypeptide, PetD), cytochrome f and the Rieske protein, while the 4 small subunits are PetG, PetL, PetM and PetN. The complex functions as a dimer.

The protein localises to the plastid. It is found in the chloroplast thylakoid membrane. In terms of biological role, component of the cytochrome b6-f complex, which mediates electron transfer between photosystem II (PSII) and photosystem I (PSI), cyclic electron flow around PSI, and state transitions. The protein is Cytochrome b6-f complex subunit 7 of Trieres chinensis (Marine centric diatom).